Here is a 448-residue protein sequence, read N- to C-terminus: StAR-related lipid transfer protein 3 (448 aa).

Residues 47 to 219 enclose the MENTAL domain; sequence FSDVRRTFCL…YSPPESLAGS (173 aa). 4 consecutive transmembrane segments (helical) span residues 53–73, 96–116, 122–142, and 150–170; these read TFCL…IIEL, FFDI…GYAA, WWVI…KVIL, and AFGY…TWFL. Residues 208–214 carry the FFAT motif; it reads QFYSPPE. One can recognise an START domain in the interval 232–445; it reads AVTEQEKAFV…LRQRINEVHV (214 aa).

The protein belongs to the STARD3 family. Homodimer. Post-translationally, phosphorylated. Phosphorylation allows the tethering of two membranes that participates in the formation of ER-endosome contacts. Phosphorylation of FFAT motif drives membrane tethering between the endoplasmic reticulum and late endosomes that in turn allows the efficient transport of sterol mediated by the START domain.

It localises to the late endosome membrane. It carries out the reaction cholesterol(in) = cholesterol(out). Sterol-binding protein that mediates cholesterol transport from the endoplasmic reticulum to endosomes. The sterol transport mechanism is triggered by phosphorylation of FFAT motif that leads to membrane tethering between the endoplasmic reticulum and late endosomes. Acts as a lipid transfer protein that redirects sterol to the endosome at the expense of the cell membrane and favors membrane formation inside endosomes. This chain is StAR-related lipid transfer protein 3, found in Danio rerio (Zebrafish).